We begin with the raw amino-acid sequence, 451 residues long: Phosphoglucosamine mutase (451 aa).

The active-site Phosphoserine intermediate is S101. Mg(2+) contacts are provided by S101, D240, D242, and D244. A Phosphoserine modification is found at S101.

It belongs to the phosphohexose mutase family. Mg(2+) is required as a cofactor. In terms of processing, activated by phosphorylation.

The catalysed reaction is alpha-D-glucosamine 1-phosphate = D-glucosamine 6-phosphate. In terms of biological role, catalyzes the conversion of glucosamine-6-phosphate to glucosamine-1-phosphate. The chain is Phosphoglucosamine mutase from Alkalilimnicola ehrlichii (strain ATCC BAA-1101 / DSM 17681 / MLHE-1).